A 433-amino-acid chain; its full sequence is D-amino acid dehydrogenase (433 aa).

3–17 is a binding site for FAD; it reads VLVLGSGVIGTTSAY.

It belongs to the DadA oxidoreductase family. FAD serves as cofactor.

It carries out the reaction a D-alpha-amino acid + A + H2O = a 2-oxocarboxylate + AH2 + NH4(+). It functions in the pathway amino-acid degradation; D-alanine degradation; NH(3) and pyruvate from D-alanine: step 1/1. Functionally, oxidative deamination of D-amino acids. This is D-amino acid dehydrogenase from Pseudomonas savastanoi pv. phaseolicola (strain 1448A / Race 6) (Pseudomonas syringae pv. phaseolicola (strain 1448A / Race 6)).